The following is a 230-amino-acid chain: Flagellar L-ring protein (230 aa).

The signal sequence occupies residues 1–15; that stretch reads MSRLPSLSSLCLAIA. A lipid anchor (N-palmitoyl cysteine) is attached at Cys16. The S-diacylglycerol cysteine moiety is linked to residue Cys16.

It belongs to the FlgH family. As to quaternary structure, the basal body constitutes a major portion of the flagellar organelle and consists of four rings (L,P,S, and M) mounted on a central rod.

The protein localises to the cell outer membrane. It is found in the bacterial flagellum basal body. Assembles around the rod to form the L-ring and probably protects the motor/basal body from shearing forces during rotation. The chain is Flagellar L-ring protein from Xanthomonas campestris pv. campestris (strain 8004).